A 201-amino-acid polypeptide reads, in one-letter code: Lipoprotein signal peptidase (201 aa).

The next 2 membrane-spanning stretches (helical) occupy residues 73-93 (SNAI…YLMI) and 97-117 (TIGS…NLID). Active-site residues include Asp126 and Asp144. The helical transmembrane segment at 135-155 (YSFPVFNLADCFITIGVIILI) threads the bilayer.

This sequence belongs to the peptidase A8 family.

The protein resides in the cell inner membrane. It carries out the reaction Release of signal peptides from bacterial membrane prolipoproteins. Hydrolyzes -Xaa-Yaa-Zaa-|-(S,diacylglyceryl)Cys-, in which Xaa is hydrophobic (preferably Leu), and Yaa (Ala or Ser) and Zaa (Gly or Ala) have small, neutral side chains.. It participates in protein modification; lipoprotein biosynthesis (signal peptide cleavage). Its function is as follows. This protein specifically catalyzes the removal of signal peptides from prolipoproteins. The sequence is that of Lipoprotein signal peptidase from Rickettsia africae (strain ESF-5).